A 298-amino-acid polypeptide reads, in one-letter code: Bifunctional protein FolD (298 aa).

NADP(+)-binding positions include 167–169 (GRS), S192, and V233.

This sequence belongs to the tetrahydrofolate dehydrogenase/cyclohydrolase family. As to quaternary structure, homodimer.

It carries out the reaction (6R)-5,10-methylene-5,6,7,8-tetrahydrofolate + NADP(+) = (6R)-5,10-methenyltetrahydrofolate + NADPH. The catalysed reaction is (6R)-5,10-methenyltetrahydrofolate + H2O = (6R)-10-formyltetrahydrofolate + H(+). Its pathway is one-carbon metabolism; tetrahydrofolate interconversion. Catalyzes the oxidation of 5,10-methylenetetrahydrofolate to 5,10-methenyltetrahydrofolate and then the hydrolysis of 5,10-methenyltetrahydrofolate to 10-formyltetrahydrofolate. The chain is Bifunctional protein FolD from Chelativorans sp. (strain BNC1).